We begin with the raw amino-acid sequence, 412 residues long: Alanyl-tRNA editing protein Aarsd1-A (412 aa).

Zn(2+)-binding residues include His108, His112, Cys208, and His212.

Belongs to the class-II aminoacyl-tRNA synthetase family. Alax-L subfamily. It depends on Zn(2+) as a cofactor.

The protein localises to the cytoplasm. Its function is as follows. Functions in trans to edit the amino acid moiety from incorrectly charged tRNA(Ala). The polypeptide is Alanyl-tRNA editing protein Aarsd1-A (aarsd1-a) (Xenopus laevis (African clawed frog)).